Consider the following 78-residue polypeptide: Acyl carrier protein (78 aa).

Positions 2–77 constitute a Carrier domain; it reads STIEERVKKI…AAIDYVNAHQ (76 aa). An O-(pantetheine 4'-phosphoryl)serine modification is found at Ser37.

It belongs to the acyl carrier protein (ACP) family. Post-translationally, 4'-phosphopantetheine is transferred from CoA to a specific serine of apo-ACP by AcpS. This modification is essential for activity because fatty acids are bound in thioester linkage to the sulfhydryl of the prosthetic group.

It is found in the cytoplasm. It functions in the pathway lipid metabolism; fatty acid biosynthesis. Functionally, carrier of the growing fatty acid chain in fatty acid biosynthesis. This is Acyl carrier protein from Pseudomonas entomophila (strain L48).